Here is a 371-residue protein sequence, read N- to C-terminus: O-antigen chain mannosyltransferase C (371 aa).

Belongs to the glycosyltransferase group 1 family. Glycosyltransferase 4 subfamily.

The catalysed reaction is N-acetyl-alpha-D-glucosaminyl-di-trans,octa-cis-undecaprenyl diphosphate + GDP-alpha-D-mannose = alpha-D-mannosyl-(1-&gt;3)-N-acetyl-alpha-D-glucosaminyl-di-trans,octa-cis-undecaprenyl diphosphate + GDP + H(+). It participates in bacterial outer membrane biogenesis; LPS O-antigen biosynthesis. In terms of biological role, mannosyltransferase involved in the biosynthesis of the repeat unit of the lipopolysaccharide (LPS) O-antigen region. Catalyzes the transfer of a single alpha-(1-&gt;3)-linked mannose residue to the acceptor N-acetyl-glucosaminyl-diphospho-undecaprenol during the synthesis of the adapter region. This Escherichia coli protein is O-antigen chain mannosyltransferase C.